Consider the following 428-residue polypeptide: Peptidase B (428 aa).

Residues K195 and D200 each contribute to the Mn(2+) site. Residue K207 is part of the active site. Residues D218, D277, and E279 each coordinate Mn(2+). The active site involves R281.

Belongs to the peptidase M17 family. Homohexamer. The cofactor is Mn(2+).

The protein resides in the cytoplasm. It catalyses the reaction Release of an N-terminal amino acid, Xaa, from a peptide or arylamide. Xaa is preferably Glu or Asp but may be other amino acids, including Leu, Met, His, Cys and Gln.. In terms of biological role, probably plays an important role in intracellular peptide degradation. The protein is Peptidase B of Cronobacter sakazakii (strain ATCC BAA-894) (Enterobacter sakazakii).